Here is a 428-residue protein sequence, read N- to C-terminus: Probable RNase MJ4 (428 aa).

Zn(2+) is bound by residues histidine 57, histidine 59, aspartate 61, histidine 62, histidine 143, aspartate 165, and histidine 397.

Belongs to the metallo-beta-lactamase superfamily. RNA-metabolizing metallo-beta-lactamase-like family. Zn(2+) is required as a cofactor.

In terms of biological role, probably an RNase. This chain is Probable RNase MJ4, found in Methanocaldococcus jannaschii (strain ATCC 43067 / DSM 2661 / JAL-1 / JCM 10045 / NBRC 100440) (Methanococcus jannaschii).